The sequence spans 139 residues: MIKRYEACFLFKSEEIEYKGSLEEVKKSLELYGATDIISNFIGERALEYPIKKQARGRYEIIEFSMEGNNLKEFESKLKLIKSLLRYMILVKIVRKINTKKIKRRNFREFKDNIDKENLKSGSKIEVPTSSESADIQEK.

It belongs to the bacterial ribosomal protein bS6 family.

Functionally, binds together with bS18 to 16S ribosomal RNA. This chain is Small ribosomal subunit protein bS6, found in Borreliella afzelii (strain PKo) (Borrelia afzelii).